The following is a 68-amino-acid chain: Large ribosomal subunit protein bL35 (68 aa).

The protein belongs to the bacterial ribosomal protein bL35 family.

The polypeptide is Large ribosomal subunit protein bL35 (Orientia tsutsugamushi (strain Ikeda) (Rickettsia tsutsugamushi)).